Here is a 296-residue protein sequence, read N- to C-terminus: Nucleotide-binding protein SUB0630 (296 aa).

Residue 13–20 participates in ATP binding; sequence GMSGAGKT. A GTP-binding site is contributed by 63–66; sequence DMRS.

This sequence belongs to the RapZ-like family.

Displays ATPase and GTPase activities. The protein is Nucleotide-binding protein SUB0630 of Streptococcus uberis (strain ATCC BAA-854 / 0140J).